We begin with the raw amino-acid sequence, 96 residues long: NADH-quinone oxidoreductase subunit K (96 aa).

The next 3 membrane-spanning stretches (helical) occupy residues 1-21 (MNYI…VLVR), 25-45 (IIVF…FVAF), and 56-76 (VIAF…LAII).

It belongs to the complex I subunit 4L family. NDH-1 is composed of 14 different subunits. Subunits NuoA, H, J, K, L, M, N constitute the membrane sector of the complex.

The protein resides in the cell membrane. The catalysed reaction is a quinone + NADH + 5 H(+)(in) = a quinol + NAD(+) + 4 H(+)(out). In terms of biological role, NDH-1 shuttles electrons from NADH, via FMN and iron-sulfur (Fe-S) centers, to quinones in the respiratory chain. The immediate electron acceptor for the enzyme in this species is believed to be a menaquinone. Couples the redox reaction to proton translocation (for every two electrons transferred, four hydrogen ions are translocated across the cytoplasmic membrane), and thus conserves the redox energy in a proton gradient. In Thermobifida fusca (strain YX), this protein is NADH-quinone oxidoreductase subunit K.